The primary structure comprises 339 residues: Probable G-protein coupled receptor 33 (339 aa).

Residues 1–30 (MDRVNSSGHVISVSPSLTNSTGVPTPAPKA) lie on the Extracellular side of the membrane. Asn5 and Asn19 each carry an N-linked (GlcNAc...) asparagine glycan. A helical transmembrane segment spans residues 31 to 53 (IIAAALFMSFIVGTISNGLYLWM). At 54–64 (LKFKMQRTVNT) the chain is on the cytoplasmic side. The helical transmembrane segment at 65–86 (LLFFHLILSYFISTLILPFMAT) threads the bilayer. Residues 87-103 (SFLQDNHWAFGSVLCKV) lie on the Extracellular side of the membrane. Cys101 and Cys179 form a disulfide bridge. The helical transmembrane segment at 104–124 (FNSTLSVSMFASVFFLSAISV) threads the bilayer. Topologically, residues 125–143 (DRYHLTLHPVWSQQHRTPR) are cytoplasmic. A helical membrane pass occupies residues 144–165 (WASRIALRIWILATILSIPYLV). Residues 166–209 (FRETHDDHKGRIKCQNNYIVGTNWESSEHQTLGQWIHAACFGRR) lie on the Extracellular side of the membrane. A helical transmembrane segment spans residues 210–230 (FLLGFLLPFLVIVFCYKRVAT). The Cytoplasmic segment spans residues 231 to 246 (KMKDKGLFKSSKPFKV). Residues 247–268 (MLTAVVSFFVCWMPYHVHSGLV) traverse the membrane as a helical segment. Residues 269 to 283 (LTKSQPLPSQLTLGL) are Extracellular-facing. A helical transmembrane segment spans residues 284 to 303 (AVVTISFNTVVSPILYLFTG). Over 304-339 (ENFEVFKKSILALFKSTFSDSSATERTQTLNSETEI) the chain is Cytoplasmic.

This sequence belongs to the G-protein coupled receptor 1 family.

It localises to the cell membrane. Its function is as follows. Orphan receptor; could be a chemoattractant receptor. The chain is Probable G-protein coupled receptor 33 (Gpr33) from Rattus rattus (Black rat).